Here is a 196-residue protein sequence, read N- to C-terminus: Dephospho-CoA kinase (196 aa).

The region spanning 6–196 is the DPCK domain; it reads AIALTGGIGT…QVERFLKTLL (191 aa). 14–19 serves as a coordination point for ATP; it reads GTGKST.

It belongs to the CoaE family.

The protein resides in the cytoplasm. The catalysed reaction is 3'-dephospho-CoA + ATP = ADP + CoA + H(+). The protein operates within cofactor biosynthesis; coenzyme A biosynthesis; CoA from (R)-pantothenate: step 5/5. In terms of biological role, catalyzes the phosphorylation of the 3'-hydroxyl group of dephosphocoenzyme A to form coenzyme A. In Helicobacter pylori (strain J99 / ATCC 700824) (Campylobacter pylori J99), this protein is Dephospho-CoA kinase.